Consider the following 514-residue polypeptide: Cytochrome P450 71AP13 (514 aa).

The chain crosses the membrane as a helical span at residues 20–37; it reads HSSLFAFSLLILLLKFIY. N-linked (GlcNAc...) asparagine glycans are attached at residues Asn127 and Asn184. Cys455 is a heme binding site.

Belongs to the cytochrome P450 family. Heme serves as cofactor. As to expression, expressed in fruit kernel, seedlings, leaves and stems.

The protein localises to the membrane. The protein is Cytochrome P450 71AP13 of Prunus mume (Japanese apricot).